A 660-amino-acid chain; its full sequence is Cullin-associated NEDD8-dissociated protein 1 homolog (660 aa).

A Glycyl lysine isopeptide (Lys-Gly) (interchain with G-Cter in NEDD8) cross-link involves residue K16. Residues 339-364 (TQNENDHGSDNLIDSDDGFGSDNDPE) form a disordered region. Over residues 351 to 363 (IDSDDGFGSDNDP) the composition is skewed to acidic residues.

In terms of assembly, interacts with unneddylated cullin CDC53. Post-translationally, neddylated at Lys-16.

Assembly factor of SCF (SKP1-CUL1-F-box protein) E3 ubiquitin ligase complexes that promotes the exchange of the substrate-recognition F-box subunit in SCF complexes, thereby playing a key role in the cellular repertoire of SCF complexes. Acts as a F-box protein exchange factor. Involved in the aging process. Longevity-assurance protein. This chain is Cullin-associated NEDD8-dissociated protein 1 homolog (LAG2), found in Saccharomyces cerevisiae (strain ATCC 204508 / S288c) (Baker's yeast).